A 546-amino-acid chain; its full sequence is Arginine--tRNA ligase (546 aa).

Positions 117-127 (ANPTGPLHIGR) match the 'HIGH' region motif.

It belongs to the class-I aminoacyl-tRNA synthetase family.

It localises to the cytoplasm. It catalyses the reaction tRNA(Arg) + L-arginine + ATP = L-arginyl-tRNA(Arg) + AMP + diphosphate. This chain is Arginine--tRNA ligase, found in Thermoplasma acidophilum (strain ATCC 25905 / DSM 1728 / JCM 9062 / NBRC 15155 / AMRC-C165).